Here is a 459-residue protein sequence, read N- to C-terminus: Argininosuccinate lyase (459 aa).

It belongs to the lyase 1 family. Argininosuccinate lyase subfamily.

It is found in the cytoplasm. It catalyses the reaction 2-(N(omega)-L-arginino)succinate = fumarate + L-arginine. Its pathway is amino-acid biosynthesis; L-arginine biosynthesis; L-arginine from L-ornithine and carbamoyl phosphate: step 3/3. The chain is Argininosuccinate lyase from Staphylococcus aureus (strain MSSA476).